The sequence spans 274 residues: MRSNNNNPLTRDEILSRYFPQYRPAVAASQGLSGGSCIIAHDTHRIVLRRHHDPDAPPAHFLRHHRALSQLPASLAPRALFYTPGWMAVEYLHGVVNSALPDADELAALLYHLHQQPRFGWRIALSPLLAQYWSCCDPARRTPFWLRRLKQLQKNGEPRPLRLAPLHMDVHGDNIVLTSAGLRLIDWEYAGDGDIALELAAVWVEDERQHRQLANAYAACARIDARQLWRQIRLWHPWVIMLKAGWFEYRWRQTGEQQFIRLADETWRQLRMKG.

Belongs to the thiamine kinase family.

The catalysed reaction is thiamine + ATP = thiamine phosphate + ADP + H(+). Its pathway is cofactor biosynthesis; thiamine diphosphate biosynthesis; thiamine phosphate from thiamine: step 1/1. Catalyzes the ATP-dependent phosphorylation of thiamine to thiamine phosphate. Is involved in thiamine salvage. The sequence is that of Thiamine kinase from Salmonella newport (strain SL254).